A 511-amino-acid chain; its full sequence is Vesicular acetylcholine transporter (511 aa).

Over 1 to 36 (MVVGQAKAAMGKISSAIGERSKRISGAMNEPLRKRK) the chain is Cytoplasmic. The chain crosses the membrane as a helical span at residues 37–57 (ILLVIVCIAMLLDNMLYMVIV). Residues 58 to 108 (PIVPNYLETIRTYKLVYITIPSNGTNGSLLNSTQRAVLERNPNANEDIQIG) are Lumenal, vesicle-facing. 3 N-linked (GlcNAc...) asparagine glycosylation sites follow: Asn-80, Asn-83, and Asn-88. A helical transmembrane segment spans residues 109 to 129 (VLFASKAILQLLSNPFTGTFI). Residues 130–135 (DRVGYD) are Cytoplasmic-facing. Residues 136 to 156 (IPLLIGLTIMFFSTITFAFGE) form a helical membrane-spanning segment. Topologically, residues 157–165 (SYAILFAAR) are lumenal, vesicle. A helical membrane pass occupies residues 166–186 (SLQGLGSAFADTSGIAMIADK). Residues 187 to 197 (YTEESERTQAL) are Cytoplasmic-facing. The helical transmembrane segment at 198–218 (GIALAFISFGSLVAPPFGGVL) threads the bilayer. At 219-225 (YQFAGKW) the chain is on the lumenal, vesicle side. The chain crosses the membrane as a helical span at residues 226–246 (VPFLVLSFVCLLDGILLLMVV). The Cytoplasmic portion of the chain corresponds to 247 to 267 (TPFASRTRGNTLQGTPIHKLM). The helical transmembrane segment at 268–288 (IDPYIAVVAGALTTCNIPLAF) threads the bilayer. Over 289–306 (LEPTISNWMKKTMNASEW) the chain is Lumenal, vesicle. The N-linked (GlcNAc...) asparagine glycan is linked to Asn-302. Residues 307–327 (QMGITWLPAFFPHILGVYITV) form a helical membrane-spanning segment. Residues 328–337 (KLAAKYPNYQ) lie on the Cytoplasmic side of the membrane. The chain crosses the membrane as a helical span at residues 338-358 (WLYGAFGLVIIGVSSCTIPAC). Topologically, residues 359–363 (RNFEE) are lumenal, vesicle. The chain crosses the membrane as a helical span at residues 364-384 (LIIPLCALCFGIALVDTALLP). Residues 385–400 (TLAFLVDIRYVSVYGS) are Cytoplasmic-facing. A helical transmembrane segment spans residues 401–421 (VYAIADISYSVAYALGPIMAG). Topologically, residues 422–428 (QIVHDLG) are lumenal, vesicle. The helical transmembrane segment at 429 to 449 (FVQLNLGMGLVNILYAPALLF) threads the bilayer. The Cytoplasmic segment spans residues 450 to 511 (LRNVCQMKPS…VLSDQEGYSE (62 aa)). Residues 486 to 511 (AKEPHGTSSGNHSVHAVLSDQEGYSE) form a disordered region.

Belongs to the major facilitator superfamily. Vesicular transporter family. As to expression, high expression in the electric lobe of the brain.

It localises to the membrane. Involved in acetylcholine transport into synaptic vesicles. The polypeptide is Vesicular acetylcholine transporter (Torpedo torpedo (Common torpedo)).